A 177-amino-acid chain; its full sequence is MTKEYATLAGGCFWCMVKPFTSYPGIKSVVSGYSGGHVDNPTYEQVCTNQTGHVEAVQITFDPEVTSFENILDIYFKTFDPTDDQGQFFDRGESYQPVIFYHDEHQKKAAEFKKQQLNEQGIFKKPVITPIKPYKNFYPAEDYHQDYYKKNPVHYYQYQRGSGRKAFIESHWGNQNA.

Residue Cys-12 is part of the active site.

Belongs to the MsrA Met sulfoxide reductase family.

It carries out the reaction L-methionyl-[protein] + [thioredoxin]-disulfide + H2O = L-methionyl-(S)-S-oxide-[protein] + [thioredoxin]-dithiol. It catalyses the reaction [thioredoxin]-disulfide + L-methionine + H2O = L-methionine (S)-S-oxide + [thioredoxin]-dithiol. Has an important function as a repair enzyme for proteins that have been inactivated by oxidation. Catalyzes the reversible oxidation-reduction of methionine sulfoxide in proteins to methionine. The polypeptide is Peptide methionine sulfoxide reductase MsrA 2 (msrA2) (Staphylococcus aureus (strain NCTC 8325 / PS 47)).